The chain runs to 321 residues: 6-phosphogluconolactonase-like protein 1 (321 aa).

The interval 36-85 (GKVSRSTQMSGTSLNGNGNTESKTMERVNSVRSNASSRGGSEDGATKKLK) is disordered. Residues 39–57 (SRSTQMSGTSLNGNGNTES) show a composition bias toward polar residues. Residues 63–74 (VNSVRSNASSRG) are compositionally biased toward low complexity. Residues serine 65 and serine 68 each carry the phosphoserine modification. Basic and acidic residues predominate over residues 75–85 (GSEDGATKKLK). A Phosphothreonine modification is found at threonine 320.

Belongs to the glucosamine/galactosamine-6-phosphate isomerase family. 6-phosphogluconolactonase subfamily.

The protein localises to the cytoplasm. Its subcellular location is the nucleus. May be involved in regulation of tRNA subcellular distribution. The sequence is that of 6-phosphogluconolactonase-like protein 1 (SOL1) from Saccharomyces cerevisiae (strain ATCC 204508 / S288c) (Baker's yeast).